We begin with the raw amino-acid sequence, 1021 residues long: Transmembrane protein 132A (1021 aa).

An N-terminal signal peptide occupies residues 1–32; that stretch reads MTERAAAAPRGPYGAWLCLLVALALEVVRVGS. Topologically, residues 33–848 are extracellular; the sequence is NQNTLDPIYL…VTDLELGMYA (816 aa). A disordered region spans residues 207 to 226; that stretch reads PAGEGPGGCGPGTEEEPKEQ. N-linked (GlcNAc...) asparagine glycosylation occurs at asparagine 276. A binds to HSPA5/GRP78 region spans residues 606 to 913; that stretch reads IEVRSPLSDS…QLDRCSSSSP (308 aa). The segment at 666-1021 is confers cellular localization similar to full-length form; the sequence is LPAPKQEVAL…NYMERIRGSS (356 aa). Positions 793–835 are disordered; that stretch reads AGDMGSHVGPGIRGKFERAEEEAGKEENEAKEEEEDEEEMVPA. Residues 806 to 820 show a composition bias toward basic and acidic residues; the sequence is GKFERAEEEAGKEEN. Residues 821-832 are compositionally biased toward acidic residues; that stretch reads EAKEEEEDEEEM. A helical membrane pass occupies residues 849 to 869; sequence LLGIFCLAFLIFLVNGVVFVL. Residues 870–1021 are Cytoplasmic-facing; sequence RYQRKEPPDS…NYMERIRGSS (152 aa). The tract at residues 903–955 is disordered; the sequence is RQLDRCSSSSPPKGEGGCPCESGAGGDTSTVAPSASESPAGSTSTLARKEAGG. Residues 929 to 948 show a composition bias toward polar residues; sequence DTSTVAPSASESPAGSTSTL.

Belongs to the TMEM132 family. Interacts with HSPA5/GRP78. In terms of tissue distribution, expressed in the brain in neuronal cells of the hypothalamus, thalamus, cerebral cortex, amygdala, and cerebellum.

The protein localises to the golgi apparatus membrane. Its subcellular location is the endoplasmic reticulum membrane. May play a role in embryonic and postnatal development of the brain. Increased resistance to cell death induced by serum starvation in cultured cells. Regulates cAMP-induced GFAP gene expression via STAT3 phosphorylation. In Rattus norvegicus (Rat), this protein is Transmembrane protein 132A (Tmem132a).